The sequence spans 1454 residues: MWAQLLLGMLALSPAIAEELPNYLVTLPARLNFPSVQKVCLDLSPGYSDVKFTVTLETKDKTQKLLEYSGLKKRHLHCISFLVPPPAGGTEEVATIRVSGVGNNISFEEKKKVLIQRQGNGTFVQTDKPLYTPGQQVYFRIVTMDSNFVPVNDKYSMVELQDPNSNRIAQWLEVVPEQGIVDLSFQLAPEAMLGTYTVAVAEGKTFGTFSVEEYVLPKFKVEVVEPKELSTVQESFLVKICCRYTYGKPMLGAVQVSVCQKANTYWYREVEREQLPDKCRNLSGQTDKTGCFSAPVDMATFDLIGYAYSHQINIVATVVEEGTGVEANATQNIYISPQMGSMTFEDTSNFYHPNFPFSGKIRVRGHDDSFLKNHLVFLVIYGTNGTFNQTLVTDNNGLAPFTLETSGWNGTDVSLEGKFQMEDLVYNPEQVPRYYQNAYLHLRPFYSTTRSFLGIHRLNGPLKCGQPQEVLVDYYIDPADASPDQEISFSYYLIGKGSLVMEGQKHLNSKKKGLKASFSLSLTFTSRLAPDPSLVIYAIFPSGGVVADKIQFSVEMCFDNQVSLGFSPSQQLPGAEVELQLQAAPGSLCALRAVDESVLLLRPDRELSNRSVYGMFPFWYGHYPYQVAEYDQCPVSGPWDFPQPLIDPMPQGHSSQRSIIWRPSFSEGTDLFSFFRDVGLKILSNAKIKKPVDCSHRSPEYSTAMGAGGGHPEAFESSTPLHQAEDSQVRQYFPETWLWDLFPIGNSGKEAVHVTVPDAITEWKAMSFCTSQSRGFGLSPTVGLTAFKPFFVDLTLPYSVVRGESFRLTATIFNYLKDCIRVQTDLAKSHEYQLESWADSQTSSCLCADDAKTHHWNITAVKLGHINFTISTKILDSNEPCGGQKGFVPQKGRSDTLIKPVLVKPEGVLVEKTHSSLLCPKGKVASESVSLELPVDIVPDSTKAYVTVLGDIMGTALQNLDGLVQMPSGCGEQNMVLFAPIIYVLQYLEKAGLLTEEIRSRAVGFLEIGYQKELMYKHSNGSYSAFGERDGNGNTWLTAFVTKCFGQAQKFIFIDPKNIQDALKWMAGNQLPSGCYANVGNLLHTAMKGGVDDEVSLTAYVTAALLEMGKDVDDPMVSQGLRCLKNSATSTTNLYTQALLAYIFSLAGEMDIRNILLKQLDQQAIISGESIYWSQKPTPSSNASPWSEPAAVDVELTAYALLAQLTKPSLTQKEIAKATSIVAWLAKQHNAYGGFSSTQDTVVALQALAKYATTAYMPSEEINLVVKSTENFQRTFNIQSVNRLVFQQDTLPNVPGMYTLEASGQGCVYVQTVLRYNILPPTNMKTFSLSVEIGKARCEQPTSPRSLTLTIHTSYVGSRSSSNMAIVEVKMLSGFSPMEGTNQLLLQQPLVKKVEFGTDTLNIYLDELIKNTQTYTFTISQSVLVTNLKPATIKVYDYYLPDEQATIQYSDPCE.

Positions 1–17 are cleaved as a signal peptide; that stretch reads MWAQLLLGMLALSPAIA. Cys-40 and Cys-78 are joined by a disulfide. Residue Asn-120 is glycosylated (N-linked (GlcNAc...) asparagine). 2 disulfides stabilise this stretch: Cys-241–Cys-291 and Cys-259–Cys-279. N-linked (GlcNAc...) asparagine glycans are attached at residues Asn-281 and Asn-409. Intrachain disulfides connect Cys-464–Cys-557, Cys-589–Cys-769, Cys-819–Cys-847, Cys-845–Cys-881, Cys-919–Cys-1307, Cys-1075–Cys-1123, and Cys-1338–Cys-1453. The bait region stretch occupies residues 695-726; the sequence is SHRSPEYSTAMGAGGGHPEAFESSTPLHQAED. An N-linked (GlcNAc...) asparagine glycan is attached at Asn-857. The segment at residues 970 to 973 is a cross-link (isoglutamyl cysteine thioester (Cys-Gln)); that stretch reads CGEQ. Asn-1020 carries N-linked (GlcNAc...) asparagine glycosylation.

The protein belongs to the protease inhibitor I39 (alpha-2-macroglobulin) family. As to quaternary structure, monomer. In the epidermis, expressed predominantly in the granular layer at the apical edge of keratinocytes (at protein level). Also detected in placenta, testis and thymus but not in epithelia of kidney, lung, small intestine or colon.

Its subcellular location is the secreted. Functionally, is able to inhibit all four classes of proteinases by a unique 'trapping' mechanism. This protein has a peptide stretch, called the 'bait region' which contains specific cleavage sites for different proteinases. When a proteinase cleaves the bait region, a conformational change is induced in the protein which traps the proteinase. The entrapped enzyme remains active against low molecular weight substrates (activity against high molecular weight substrates is greatly reduced). Following cleavage in the bait region a thioester bond is hydrolyzed and mediates the covalent binding of the protein to the proteinase. Displays inhibitory activity against chymotrypsin, papain, thermolysin, subtilisin A and, to a lesser extent, elastase but not trypsin. May play an important role during desquamation by inhibiting extracellular proteases. The chain is Alpha-2-macroglobulin-like protein 1 from Homo sapiens (Human).